Here is a 247-residue protein sequence, read N- to C-terminus: DNA polymerase sliding clamp (247 aa).

The protein belongs to the PCNA family. In terms of assembly, homotrimer. The subunits circularize to form a toroid; DNA passes through its center. Replication factor C (RFC) is required to load the toroid on the DNA.

Its function is as follows. Sliding clamp subunit that acts as a moving platform for DNA processing. Responsible for tethering the catalytic subunit of DNA polymerase and other proteins to DNA during high-speed replication. The protein is DNA polymerase sliding clamp of Natronomonas pharaonis (strain ATCC 35678 / DSM 2160 / CIP 103997 / JCM 8858 / NBRC 14720 / NCIMB 2260 / Gabara) (Halobacterium pharaonis).